Consider the following 438-residue polypeptide: Na(+)/H(+) antiporter NhaA (438 aa).

The next 11 membrane-spanning stretches (helical) occupy residues 23–43 (FGGI…NSFL), 62–82 (FFIG…LFFL), 104–124 (SFPV…YFFL), 133–153 (GFGI…MLLG), 162–182 (VFLI…IALF), 185–205 (TNLK…LAIL), 212–232 (SLIP…QSGI), 302–322 (FLAP…NAGV), 337–357 (LGVI…ITFI), 372–392 (WWHI…SMFI), and 410–430 (IAIL…LFAL).

It belongs to the NhaA Na(+)/H(+) (TC 2.A.33) antiporter family.

Its subcellular location is the cell inner membrane. It carries out the reaction Na(+)(in) + 2 H(+)(out) = Na(+)(out) + 2 H(+)(in). In terms of biological role, na(+)/H(+) antiporter that extrudes sodium in exchange for external protons. The protein is Na(+)/H(+) antiporter NhaA of Helicobacter pylori (strain J99 / ATCC 700824) (Campylobacter pylori J99).